Here is a 158-residue protein sequence, read N- to C-terminus: S-ribosylhomocysteine lyase (158 aa).

Residues H54, H58, and C124 each coordinate Fe cation.

The protein belongs to the LuxS family. In terms of assembly, homodimer. It depends on Fe cation as a cofactor.

The enzyme catalyses S-(5-deoxy-D-ribos-5-yl)-L-homocysteine = (S)-4,5-dihydroxypentane-2,3-dione + L-homocysteine. Its function is as follows. Involved in the synthesis of autoinducer 2 (AI-2) which is secreted by bacteria and is used to communicate both the cell density and the metabolic potential of the environment. The regulation of gene expression in response to changes in cell density is called quorum sensing. Catalyzes the transformation of S-ribosylhomocysteine (RHC) to homocysteine (HC) and 4,5-dihydroxy-2,3-pentadione (DPD). The sequence is that of S-ribosylhomocysteine lyase from Limosilactobacillus reuteri (strain DSM 20016) (Lactobacillus reuteri).